A 136-amino-acid chain; its full sequence is Lymphocyte antigen 6E (136 aa).

The signal sequence occupies residues 1–26 (MSATSNMRVFLPVLLAALLGMEQVHS). The region spanning 27-118 (LMCFSCTDQK…AGLGLRASIP (92 aa)) is the UPAR/Ly6 domain. Intrachain disulfides connect cysteine 29/cysteine 54, cysteine 32/cysteine 41, cysteine 47/cysteine 76, cysteine 80/cysteine 98, and cysteine 99/cysteine 104. Asparagine 105 carries N-linked (GlcNAc...) asparagine glycosylation. Alanine 108 is lipidated: GPI-anchor amidated alanine. Positions 109-136 (AGLGLRASIPLLGLGLLLSLLALLQLSP) are cleaved as a propeptide — removed in mature form.

Interacts with CHRNA4. Interacts with CD3Z/CD247. Ubiquitously expressed in mouse adult tissues with maximal expression in the lung and the salivary gland. Expression is strikingly lower in the fetal tissues except for the placenta. Present in thymus where its expression is observed in immature thymocytes and thymic stromal cells. Also found on functionally active T-cells as well as B-cells and thymic dendritic cells.

Its subcellular location is the cell membrane. In terms of biological role, GPI-anchored cell surface protein that regulates T-lymphocytes proliferation, differentiation, and activation. Regulates the T-cell receptor (TCR) signaling by interacting with component CD3Z/CD247 at the plasma membrane, leading to CD3Z/CD247 phosphorylation modulation. Restricts the entry of murine coronavirus, mouse hepatitis virus, by interfering with spike protein-mediated membrane fusion. Also plays an essential role in placenta formation by acting as the main receptor for syncytin-A (SynA). Therefore, participates in the normal fusion of syncytiotrophoblast layer I (SynT-I) and in the proper morphogenesis of both fetal and maternal vasculatures within the placenta. May also act as a modulator of nicotinic acetylcholine receptors (nAChRs) activity. In vitro inhibits alpha-3:beta-4-containing nAChRs maximum response. This chain is Lymphocyte antigen 6E, found in Mus musculus (Mouse).